The primary structure comprises 255 residues: Tryptophan synthase alpha chain (255 aa).

Residues glutamate 44 and aspartate 55 each act as proton acceptor in the active site.

This sequence belongs to the TrpA family. Tetramer of two alpha and two beta chains.

It carries out the reaction (1S,2R)-1-C-(indol-3-yl)glycerol 3-phosphate + L-serine = D-glyceraldehyde 3-phosphate + L-tryptophan + H2O. Its pathway is amino-acid biosynthesis; L-tryptophan biosynthesis; L-tryptophan from chorismate: step 5/5. The alpha subunit is responsible for the aldol cleavage of indoleglycerol phosphate to indole and glyceraldehyde 3-phosphate. The sequence is that of Tryptophan synthase alpha chain from Dehalococcoides mccartyi (strain ATCC BAA-2100 / JCM 16839 / KCTC 5957 / BAV1).